The primary structure comprises 361 residues: Beta-hexosaminidase (361 aa).

Substrate contacts are provided by residues Asp69, Arg77, Arg144, and 174–175; that span reads KH. The Proton donor/acceptor role is filled by His187. Asp258 serves as the catalytic Nucleophile.

The protein belongs to the glycosyl hydrolase 3 family. NagZ subfamily.

The protein localises to the cytoplasm. The catalysed reaction is Hydrolysis of terminal non-reducing N-acetyl-D-hexosamine residues in N-acetyl-beta-D-hexosaminides.. Its pathway is cell wall biogenesis; peptidoglycan recycling. Plays a role in peptidoglycan recycling by cleaving the terminal beta-1,4-linked N-acetylglucosamine (GlcNAc) from peptide-linked peptidoglycan fragments, giving rise to free GlcNAc, anhydro-N-acetylmuramic acid and anhydro-N-acetylmuramic acid-linked peptides. The protein is Beta-hexosaminidase of Neisseria meningitidis serogroup C (strain 053442).